Here is a 334-residue protein sequence, read N- to C-terminus: Protein-methionine-sulfoxide reductase catalytic subunit MsrP (334 aa).

Residues 1-44 (MKKNQFLKESDVTAESVFFMKRRQVLKALGISATALSLPHAAHA) constitute a signal peptide (tat-type signal). Mo-molybdopterin is bound by residues N88, 91-92 (YE), C146, T181, N233, R238, and 249-251 (GIK).

This sequence belongs to the MsrP family. As to quaternary structure, heterodimer of a catalytic subunit (MsrP) and a heme-binding subunit (MsrQ). It depends on Mo-molybdopterin as a cofactor. Post-translationally, predicted to be exported by the Tat system. The position of the signal peptide cleavage has not been experimentally proven.

The protein resides in the periplasm. The catalysed reaction is L-methionyl-[protein] + a quinone + H2O = L-methionyl-(S)-S-oxide-[protein] + a quinol. It carries out the reaction L-methionyl-[protein] + a quinone + H2O = L-methionyl-(R)-S-oxide-[protein] + a quinol. In terms of biological role, part of the MsrPQ system that repairs oxidized periplasmic proteins containing methionine sulfoxide residues (Met-O), using respiratory chain electrons. Thus protects these proteins from oxidative-stress damage caused by reactive species of oxygen and chlorine generated by the host defense mechanisms. MsrPQ is essential for the maintenance of envelope integrity under bleach stress, rescuing a wide series of structurally unrelated periplasmic proteins from methionine oxidation, including the primary periplasmic chaperone SurA and the lipoprotein Pal. The catalytic subunit MsrP is non-stereospecific, being able to reduce both (R-) and (S-) diastereoisomers of methionine sulfoxide. This is Protein-methionine-sulfoxide reductase catalytic subunit MsrP from Escherichia coli (strain K12 / MC4100 / BW2952).